The sequence spans 149 residues: MRLFYFSAMSVIGLLARNNMVVVASDKPITAVETLGNPVHLHHEVVESGLVRSLRTREKDIQDSTVAKDDAIKVEEDRSSLIQTINTPRYAYWFSQQMTPLDVRRELHLPAHKLQAKPSKVYSGYVEYYNIHCSFFKYRDEPFCCVKEY.

Residues 1-24 (MRLFYFSAMSVIGLLARNNMVVVA) form the signal peptide. The RxLR-dEER signature appears at 52–78 (RSLRTREKDIQDSTVAKDDAIKVEEDR).

This sequence belongs to the RxLR effector family.

It localises to the secreted. It is found in the host cytoplasm. Its subcellular location is the host nucleus. Its function is as follows. Effector that acts as a broad suppressor of cell death to interrupt plant immunity. Inhibits cell death induced by cell death-inducing proteins, including the PAMP elicitor INF1 from P.infestans. The polypeptide is Secreted RxLR effector protein 17 (Plasmopara viticola (Downy mildew of grapevine)).